The primary structure comprises 306 residues: Polyphosphate kinase PPK2B (306 aa).

This sequence belongs to the polyphosphate kinase 2 (PPK2) family. Class I subfamily. Homotetramer. Mn(2+) is required as a cofactor.

It carries out the reaction [phosphate](n) + ATP = [phosphate](n+1) + ADP. The enzyme catalyses [phosphate](n) + GTP = [phosphate](n+1) + GDP. Functionally, catalyzes the synthesis of polyP from ATP or GTP. Can also use inorganic polyphosphate (polyP) as a donor to convert ADP to ATP, but the activity is 10-fold higher in vitro for polyP synthesis than for ATP formation. This is Polyphosphate kinase PPK2B from Corynebacterium glutamicum (strain ATCC 13032 / DSM 20300 / JCM 1318 / BCRC 11384 / CCUG 27702 / LMG 3730 / NBRC 12168 / NCIMB 10025 / NRRL B-2784 / 534).